The sequence spans 321 residues: Ribose-phosphate pyrophosphokinase 2 (321 aa).

The Mg(2+) site is built by aspartate 130, histidine 132, and aspartate 145. Phosphoserine is present on serine 172.

It belongs to the ribose-phosphate pyrophosphokinase family.

It localises to the cytoplasm. The enzyme catalyses D-ribose 5-phosphate + ATP = 5-phospho-alpha-D-ribose 1-diphosphate + AMP + H(+). Its pathway is metabolic intermediate biosynthesis; 5-phospho-alpha-D-ribose 1-diphosphate biosynthesis; 5-phospho-alpha-D-ribose 1-diphosphate from D-ribose 5-phosphate (route I): step 1/1. Its function is as follows. 5-phosphoribose 1-diphosphate synthase involved in nucleotide, histidine, and tryptophan biosynthesis. Active in heteromultimeric complexes with other 5-phosphoribose 1-diphosphate synthases. The polypeptide is Ribose-phosphate pyrophosphokinase 2 (Schizosaccharomyces pombe (strain 972 / ATCC 24843) (Fission yeast)).